The following is a 658-amino-acid chain: MFNLSLHGDPYPQQPGHLQLSWLDRMGERVRLAWMRHKQVNGWVLGRMAKRVLKAQTERESMTPEALREDLQRLTLALRRDGLEDALVEQAFAHVRLTAQRVLGMAHFPVQLKGGYIMLMGYLAEMDTGEGKTLTATLPAATAALAGFTVHVVTVNEYLARRDAQLMTPLYRALGVTTGVVTESMDSDEKQLGYRANVVYCTSKTLVFDYLRDRIQLGERMKPMAMAFDALVGGGRGQVMLQGLQYAIVDEADSIFVDEARTPLIISAPSKDASELAFLHTAWSLSQQLQQGQDYTLSGEEPPRITEAGSAQLAQLCVDLPPVWQGQHRREEAVAQALTAQHSFDRDVHYIIRDDKVMVVDETTGRVMPDRAWERGLQQLIEIKEGVAVTPPKETLAKISFQLFFRRFLRLSGMSGTCREVGGEIAEVYGLGVVRVAPNRPSKRKNLPIALYAWRAQADAAVVQAVRRCHMLGQPVLVGTRSIAASELLSQSFSEAGLPHRVLNAKQDQEENTIIAEAGYKGGITIATNMAGRGTDIKLSKEVQACGGLHVILTERHDNRRVDRQLAGRCARQGDPGSWQEILSLEDELTQKFLPLLGRTLRAWLALMPHFFLARWLGMVYYRWAQSYADRGHRRVRRQLMKTDFQLRQSLSFTGEME.

ATP-binding positions include Q111, 129 to 133 (GEGKT), and D536.

This sequence belongs to the SecA family. Monomer and homodimer. Part of the essential Sec protein translocation apparatus which comprises SecA, SecYEG and auxiliary proteins SecDF-YajC and YidC.

The protein localises to the cell inner membrane. Its subcellular location is the cytoplasm. The enzyme catalyses ATP + H2O + cellular proteinSide 1 = ADP + phosphate + cellular proteinSide 2.. Part of the Sec protein translocase complex. Interacts with the SecYEG preprotein conducting channel. Has a central role in coupling the hydrolysis of ATP to the transfer of proteins into and across the cell membrane, serving both as a receptor for the preprotein-SecB complex and as an ATP-driven molecular motor driving the stepwise translocation of polypeptide chains across the membrane. The polypeptide is Protein translocase subunit SecA 3 (Magnetococcus marinus (strain ATCC BAA-1437 / JCM 17883 / MC-1)).